A 213-amino-acid chain; its full sequence is UPF0301 protein RPC_0788 (213 aa).

The interval Met1 to Ser20 is disordered.

Belongs to the UPF0301 (AlgH) family.

This Rhodopseudomonas palustris (strain BisB18) protein is UPF0301 protein RPC_0788.